The chain runs to 139 residues: 3-hydroxyacyl-[acyl-carrier-protein] dehydratase FabZ (139 aa).

Residue histidine 47 is part of the active site.

This sequence belongs to the thioester dehydratase family. FabZ subfamily.

The protein localises to the cytoplasm. The catalysed reaction is a (3R)-hydroxyacyl-[ACP] = a (2E)-enoyl-[ACP] + H2O. Its function is as follows. Involved in unsaturated fatty acids biosynthesis. Catalyzes the dehydration of short chain beta-hydroxyacyl-ACPs and long chain saturated and unsaturated beta-hydroxyacyl-ACPs. The chain is 3-hydroxyacyl-[acyl-carrier-protein] dehydratase FabZ from Clostridium perfringens (strain ATCC 13124 / DSM 756 / JCM 1290 / NCIMB 6125 / NCTC 8237 / Type A).